Reading from the N-terminus, the 205-residue chain is TATA-box-binding protein (205 aa).

Tandem repeats lie at residues L27–I103 and I117–L194.

This sequence belongs to the TBP family. Belongs to the TFIID complex together with the TBP-associated factors (TAFs). Binds DNA as monomer.

The protein resides in the nucleus. General transcription factor that functions at the core of the DNA-binding multiprotein factor TFIID. Binding of TFIID to the TATA box is the initial transcriptional step of the pre-initiation complex (PIC), playing a role in the activation of eukaryotic genes transcribed by RNA polymerase II. This Dictyostelium discoideum (Social amoeba) protein is TATA-box-binding protein (tbpA).